The sequence spans 236 residues: Small ribosomal subunit protein uS3 (236 aa).

The KH type-2 domain occupies 39-107; the sequence is IRSYVMEELK…ETSLNIVEIR (69 aa). The segment at 214–236 is disordered; sequence ASEHRATRNDNSSSSLNRRRESV.

It belongs to the universal ribosomal protein uS3 family. In terms of assembly, part of the 30S ribosomal subunit. Forms a tight complex with proteins S10 and S14.

In terms of biological role, binds the lower part of the 30S subunit head. Binds mRNA in the 70S ribosome, positioning it for translation. The sequence is that of Small ribosomal subunit protein uS3 from Bartonella bacilliformis (strain ATCC 35685 / KC583 / Herrer 020/F12,63).